A 365-amino-acid chain; its full sequence is Cobalt-precorrin-5B C(1)-methyltransferase (365 aa).

Belongs to the CbiD family.

It catalyses the reaction Co-precorrin-5B + S-adenosyl-L-methionine = Co-precorrin-6A + S-adenosyl-L-homocysteine. Its pathway is cofactor biosynthesis; adenosylcobalamin biosynthesis; cob(II)yrinate a,c-diamide from sirohydrochlorin (anaerobic route): step 6/10. Catalyzes the methylation of C-1 in cobalt-precorrin-5B to form cobalt-precorrin-6A. This chain is Cobalt-precorrin-5B C(1)-methyltransferase, found in Clostridium perfringens (strain SM101 / Type A).